The following is a 553-amino-acid chain: Coiled-coil domain-containing protein 85A (553 aa).

Low complexity predominate over residues 1–28 (MSKAAGGAAAAAAAAESCSPAPAGSSAA). The segment at 1-37 (MSKAAGGAAAAAAAAESCSPAPAGSSAAPPAPVEDLS) is disordered. 2 coiled-coil regions span residues 43–109 (ELLQ…RDLC) and 137–169 (MHKE…KELC). 3 disordered regions span residues 203–414 (YVRD…GMNE), 433–461 (ENRM…GWGS), and 491–518 (SGAD…QPEP). Residues 209–220 (DGSSTSSTGSTD) are compositionally biased toward low complexity. Residues 236-260 (HLQKPRSEGSPEHSKHRSASPEHPQ) are compositionally biased toward basic and acidic residues. The segment covering 376–389 (GGSGGSGGSGGGSR) has biased composition (gly residues). Positions 391–403 (GTLRRQAQEDGSP) are enriched in basic and acidic residues. Residues 412–443 (MNESTLSYVRQLEARVRQLEEENRMLPQASQN) are a coiled coil. Residues 439 to 455 (QASQNRRQPPTRNSSNM) are compositionally biased toward polar residues. Residues 491-508 (SGADGSNSSPNSAASFSG) are compositionally biased toward low complexity. Residue arginine 541 is modified to Asymmetric dimethylarginine.

It belongs to the CCDC85 family. As to quaternary structure, may interact with ARVCF; CTNND1; CTNND2 and PKP4.

The protein resides in the cell junction. Its subcellular location is the adherens junction. Its function is as follows. May play a role in cell-cell adhesion and epithelium development through its interaction with proteins of the beta-catenin family. This Homo sapiens (Human) protein is Coiled-coil domain-containing protein 85A (CCDC85A).